The following is a 343-amino-acid chain: MHELTYLQAGVIGLLQGITELFPVSSLGHSVLIPALIGGSWQHLVTENASGNSEGSPYLTFVVGLHVATAVALLVFFRSDWARVIRAFLTTLRTRRIETSAQRLAWLIVAATVPVGIIGLALEHTFRTLFAKPLAAALFLTANGMILLAGERLRRRSEQRAGTHQASARAEPATIPLTVPAPATVPTQTTSAPGGRATARHTTAPRGGLVVSEHRSLDTLAYREAGVIGLFQTLALLAGISRSGITMVAGLLRGLDHEDAARFSFLLATPVILAAGLLKLPALAGPAGDGIRGQVILGALIAGIAAYLSIRFLVRYFETRTLTPFAIYCLLTGALCTVRFAIA.

The next 4 helical transmembrane spans lie at leucine 21 to tryptophan 41, proline 57 to phenylalanine 77, leucine 104 to histidine 124, and leucine 129 to alanine 149. A compositionally biased stretch (low complexity) spans valine 179–proline 193. The segment at valine 179–threonine 202 is disordered. 4 helical membrane passes run alanine 225–isoleucine 245, phenylalanine 265–glycine 285, glutamine 294–valine 314, and leucine 322–isoleucine 342.

This sequence belongs to the UppP family.

The protein resides in the cell membrane. It carries out the reaction di-trans,octa-cis-undecaprenyl diphosphate + H2O = di-trans,octa-cis-undecaprenyl phosphate + phosphate + H(+). In terms of biological role, catalyzes the dephosphorylation of undecaprenyl diphosphate (UPP). Confers resistance to bacitracin. This is Undecaprenyl-diphosphatase 2 from Frankia alni (strain DSM 45986 / CECT 9034 / ACN14a).